Here is a 1786-residue protein sequence, read N- to C-terminus: Laminin subunit beta-1 (1786 aa).

Positions 1 to 21 are cleaved as a signal peptide; the sequence is MGLLQVFAFGVLALWGTRVCA. Residues 31-270 enclose the Laminin N-terminal domain; the sequence is AEGSCYPATG…AVYDMVVRGN (240 aa). N-linked (GlcNAc...) asparagine glycosylation is present at Asn120. Ser250 is subject to Phosphoserine. 19 disulfide bridges follow: Cys271–Cys280, Cys273–Cys298, Cys300–Cys309, Cys312–Cys332, Cys335–Cys344, Cys337–Cys362, Cys365–Cys374, Cys377–Cys395, Cys398–Cys411, Cys400–Cys426, Cys428–Cys437, Cys440–Cys455, Cys458–Cys472, Cys460–Cys479, Cys481–Cys490, Cys493–Cys507, Cys510–Cys522, Cys512–Cys529, and Cys531–Cys540. 4 consecutive Laminin EGF-like domains span residues 271-334, 335-397, 398-457, and 458-509; these read CFCY…ACKK, CNCN…LCEP, CTCD…GCKS, and CACN…GCRP. Asn356 carries an N-linked (GlcNAc...) asparagine glycan. A Laminin EGF-like 5; truncated domain is found at 510 to 540; it reads CDCDLGGALNNSCSEDSGQCSCLPHMIGRQC. Asn519 carries N-linked (GlcNAc...) asparagine glycosylation. A Laminin IV type B domain is found at 549 to 767; sequence FTTLDHYIYE…IIFSISALIH (219 aa). Asn677 carries an N-linked (GlcNAc...) asparagine glycan. 32 disulfides stabilise this stretch: Cys773-Cys785, Cys775-Cys792, Cys794-Cys803, Cys806-Cys818, Cys821-Cys833, Cys823-Cys840, Cys842-Cys851, Cys854-Cys864, Cys867-Cys876, Cys869-Cys883, Cys886-Cys895, Cys898-Cys914, Cys917-Cys933, Cys919-Cys944, Cys946-Cys955, Cys958-Cys973, Cys976-Cys990, Cys978-Cys997, Cys1000-Cys1009, Cys1012-Cys1025, Cys1028-Cys1040, Cys1030-Cys1054, Cys1056-Cys1065, Cys1068-Cys1081, Cys1084-Cys1096, Cys1086-Cys1103, Cys1105-Cys1114, Cys1117-Cys1129, Cys1132-Cys1144, Cys1134-Cys1151, Cys1153-Cys1162, and Cys1165-Cys1176. 8 Laminin EGF-like domains span residues 773-820, 821-866, 867-916, 917-975, 976-1027, 1028-1083, 1084-1131, and 1132-1178; these read CECD…GCKP, CDCH…SCQP, CQCN…HCRP, CPCP…SCQP, CQCH…DCRK, CVCN…GCGP, CNCN…ECRA, and CDCD…DCTP. N-linked (GlcNAc...) asparagine glycosylation is present at Asn1041. Positions 1179–1397 are domain II; sequence CHQCFALWDA…LDLSAVAQMT (219 aa). N-linked (GlcNAc...) asparagine glycans are attached at residues Asn1195, Asn1279, Asn1336, and Asn1343. A coiled-coil region spans residues 1216-1315; that stretch reads YRETVDSVEK…LEFIKNSDIQ (100 aa). Residues 1368-1388 are a coiled coil; the sequence is KEQQEEQARLLDELAGKLQSL. The segment at 1398 to 1430 is domain alpha; sequence CGTPPGADCSESECGGPNCRTDEGEKKCGGPGC. The domain I stretch occupies residues 1431 to 1786; sequence GGLVTVAHSA…EKVAVYSTCL (356 aa). Residues 1448–1778 are a coiled coil; it reads DRDVLSALAE…RSLLKDISEK (331 aa). N-linked (GlcNAc...) asparagine glycosylation occurs at Asn1487. Position 1496 is a phosphoserine (Ser1496). Residues Asn1542 and Asn1643 are each glycosylated (N-linked (GlcNAc...) asparagine). Ser1666 carries the phosphoserine modification.

In terms of assembly, laminin is a complex glycoprotein, consisting of three different polypeptide chains (alpha, beta, gamma), which are bound to each other by disulfide bonds into a cross-shaped molecule comprising one long and three short arms with globules at each end. Beta-1 is a subunit of laminin-1 (laminin-111 or EHS laminin), laminin-2 (laminin-211 or merosin), laminin-6 (laminin-311 or K-laminin), laminin-8 (laminin-411), laminin-10 (laminin-511) and laminin-12 (laminin-213). Interacts with ITGB1. As to expression, widely expressed in the embryo. High levels are detected in the cerebellar basement membrane, at postnatal day 7.

It is found in the secreted. Its subcellular location is the extracellular space. The protein resides in the extracellular matrix. It localises to the basement membrane. Binding to cells via a high affinity receptor, laminin is thought to mediate the attachment, migration and organization of cells into tissues during embryonic development by interacting with other extracellular matrix components. Involved in the organization of the laminar architecture of the cerebral cortex. It is probably required for the integrity of the basement membrane/glia limitans that serves as an anchor point for the endfeet of radial glial cells and as a physical barrier to migrating neurons. Radial glial cells play a central role in cerebral cortical development, where they act both as the proliferative unit of the cerebral cortex and a scaffold for neurons migrating toward the pial surface. This Mus musculus (Mouse) protein is Laminin subunit beta-1 (Lamb1).